Consider the following 469-residue polypeptide: ATP synthase subunit beta (469 aa).

155-162 (GGAGVGKT) serves as a coordination point for ATP.

It belongs to the ATPase alpha/beta chains family. As to quaternary structure, F-type ATPases have 2 components, CF(1) - the catalytic core - and CF(0) - the membrane proton channel. CF(1) has five subunits: alpha(3), beta(3), gamma(1), delta(1), epsilon(1). CF(0) has three main subunits: a(1), b(2) and c(9-12). The alpha and beta chains form an alternating ring which encloses part of the gamma chain. CF(1) is attached to CF(0) by a central stalk formed by the gamma and epsilon chains, while a peripheral stalk is formed by the delta and b chains.

Its subcellular location is the cell inner membrane. It carries out the reaction ATP + H2O + 4 H(+)(in) = ADP + phosphate + 5 H(+)(out). Its function is as follows. Produces ATP from ADP in the presence of a proton gradient across the membrane. The catalytic sites are hosted primarily by the beta subunits. This chain is ATP synthase subunit beta, found in Helicobacter pylori (strain ATCC 700392 / 26695) (Campylobacter pylori).